We begin with the raw amino-acid sequence, 429 residues long: 26S proteasome regulatory subunit 6A homolog (429 aa).

A disordered region spans residues 1 to 21; that stretch reads MSSPPPAAAAAMAVDDADDDQ. ATP is bound at residue 217-224; that stretch reads GPPGTGKT.

It belongs to the AAA ATPase family.

The protein localises to the cytoplasm. It localises to the nucleus. The 26S proteasome is involved in the ATP-dependent degradation of ubiquitinated proteins. The regulatory (or ATPase) complex confers ATP dependency and substrate specificity to the 26S complex. The chain is 26S proteasome regulatory subunit 6A homolog (TBP1) from Oryza sativa subsp. japonica (Rice).